Here is a 228-residue protein sequence, read N- to C-terminus: Probable septum site-determining protein MinC (228 aa).

It belongs to the MinC family. As to quaternary structure, interacts with MinD and FtsZ.

In terms of biological role, cell division inhibitor that blocks the formation of polar Z ring septums. Rapidly oscillates between the poles of the cell to destabilize FtsZ filaments that have formed before they mature into polar Z rings. Prevents FtsZ polymerization. The chain is Probable septum site-determining protein MinC from Oceanobacillus iheyensis (strain DSM 14371 / CIP 107618 / JCM 11309 / KCTC 3954 / HTE831).